The following is a 322-amino-acid chain: Phosphoenolpyruvate transferase (322 aa).

Residue Asp-58 coordinates 7,8-didemethyl-8-hydroxy-5-deazariboflavin.

It belongs to the CofD family. In terms of assembly, homodimer. It depends on Mg(2+) as a cofactor.

The enzyme catalyses enolpyruvoyl-2-diphospho-5'-guanosine + 7,8-didemethyl-8-hydroxy-5-deazariboflavin = dehydro coenzyme F420-0 + GMP + H(+). It participates in cofactor biosynthesis; coenzyme F420 biosynthesis. Catalyzes the transfer of the phosphoenolpyruvate moiety from enoylpyruvoyl-2-diphospho-5'-guanosine (EPPG) to 7,8-didemethyl-8-hydroxy-5-deazariboflavin (FO) with the formation of dehydro coenzyme F420-0 and GMP. This chain is Phosphoenolpyruvate transferase, found in Thermobifida fusca (strain YX).